A 547-amino-acid chain; its full sequence is Cytochrome P450 78A1 (547 aa).

The span at 84-94 shows a compositional bias: low complexity; sequence ASSRCPGAAAP. The interval 84 to 104 is disordered; that stretch reads ASSRCPGAAAPRPRRDGPRRR. Position 490 (cysteine 490) interacts with heme.

This sequence belongs to the cytochrome P450 family. Heme is required as a cofactor. As to expression, shoot apex.

This is Cytochrome P450 78A1 (CYP78A1) from Zea mays (Maize).